We begin with the raw amino-acid sequence, 352 residues long: Phosphoribosylformylglycinamidine cyclo-ligase (352 aa).

It belongs to the AIR synthase family.

Its subcellular location is the cytoplasm. The catalysed reaction is 2-formamido-N(1)-(5-O-phospho-beta-D-ribosyl)acetamidine + ATP = 5-amino-1-(5-phospho-beta-D-ribosyl)imidazole + ADP + phosphate + H(+). The protein operates within purine metabolism; IMP biosynthesis via de novo pathway; 5-amino-1-(5-phospho-D-ribosyl)imidazole from N(2)-formyl-N(1)-(5-phospho-D-ribosyl)glycinamide: step 2/2. This Stenotrophomonas maltophilia (strain K279a) protein is Phosphoribosylformylglycinamidine cyclo-ligase.